The sequence spans 437 residues: MGKECYYLSWILKFHLLLVLIQLVDSGSTIRFLPGFQGPLPFELETGYIGVGEAEKDQMFYYFIKSESNPEKDPLLLWLSGGPFCSSFTALIYENGPIAFKAEEYNGSIPSLVSTTYAWTKVASILYLDQPVGTGFSYSRNPLADIPSDTGVAKPVNEFLHKWLDKHPEFLSNPLYVAGNSYSGIVIPTIVQEISNGNHLDSKPQINLQGFVLGNPATDTDIDLNSRIPFAHGKALISDEHYESLKRSCQGNYISVNPRNTKCLKLLEDFKKCVSGISEEYILKPDCMWLYSCMANLHSLSEYWANEKSVRKALLVNEGTVRKWIRCNTEIAYNKDIRSSVPYHKYISIEGYRSLVFSGDHDMLVPFLGTQAWIRSLNYSIVDDWRPWMVQNQVAGYTRTYANKMTFATVKGGGHTSEYKPVETYIMIKRWLSGQPL.

Positions 1–26 (MGKECYYLSWILKFHLLLVLIQLVDS) are cleaved as a signal peptide. 3 disulfide bridges follow: Cys85–Cys327, Cys249–Cys263, and Cys287–Cys293. Asn106 is a glycosylation site (N-linked (GlcNAc...) asparagine). Residue Ser181 is part of the active site. Asp362 is a catalytic residue. An N-linked (GlcNAc...) asparagine glycan is attached at Asn378. The active site involves His415.

It belongs to the peptidase S10 family. As to expression, expressed in seedlings and siliques.

The protein resides in the secreted. Probable carboxypeptidase. This Arabidopsis thaliana (Mouse-ear cress) protein is Serine carboxypeptidase-like 17 (SCPL17).